We begin with the raw amino-acid sequence, 335 residues long: Vitamin B12 import system permease protein BtuC (335 aa).

Helical transmembrane passes span 25–45, 67–87, 95–114, 118–140, 153–173, 200–220, 243–263, 286–306, and 308–328; these read LVVI…IWLW, LAVL…QALF, GLLG…VLLG, LPIW…LLLG, LLVG…AVYF, LVLA…VLNF, VLAI…ISFI, CALA…IALF, and AELP…IWLL.

Belongs to the binding-protein-dependent transport system permease family. FecCD subfamily. In terms of assembly, the complex is composed of two ATP-binding proteins (BtuD), two transmembrane proteins (BtuC) and a solute-binding protein (BtuF).

It is found in the cell inner membrane. Functionally, part of the ABC transporter complex BtuCDF involved in vitamin B12 import. Involved in the translocation of the substrate across the membrane. This Yersinia enterocolitica serotype O:8 / biotype 1B (strain NCTC 13174 / 8081) protein is Vitamin B12 import system permease protein BtuC.